Consider the following 232-residue polypeptide: Somatolactin (232 aa).

Residues 1 to 16 (MHNWKGVWLCSLFLTF) form the signal peptide. Disulfide bonds link Cys-31/Cys-41, Cys-91/Cys-206, and Cys-223/Cys-231. Asn-147 carries an N-linked (GlcNAc...) asparagine glycan.

The protein belongs to the somatotropin/prolactin family. Pituitary gland.

The protein resides in the secreted. The protein is Somatolactin of Protopterus annectens (African lungfish).